The following is a 315-amino-acid chain: Methionyl-tRNA formyltransferase (315 aa).

Positions 2–189 are N-terminal domain; sequence SESLRIIFAG…LITTLKQLAD (188 aa). 113–116 is a binding site for (6S)-5,6,7,8-tetrahydrofolate; that stretch reads SLLP. Residues 210-315 are C-terminal domain; sequence KEEARIDWSL…EWFVPGNRLV (106 aa).

The protein belongs to the Fmt family.

It carries out the reaction L-methionyl-tRNA(fMet) + (6R)-10-formyltetrahydrofolate = N-formyl-L-methionyl-tRNA(fMet) + (6S)-5,6,7,8-tetrahydrofolate + H(+). Functionally, attaches a formyl group to the free amino group of methionyl-tRNA(fMet). The formyl group appears to play a dual role in the initiator identity of N-formylmethionyl-tRNA by promoting its recognition by IF2 and preventing the misappropriation of this tRNA by the elongation apparatus. This is Methionyl-tRNA formyltransferase from Escherichia coli O157:H7.